Reading from the N-terminus, the 147-residue chain is D-aminoacyl-tRNA deacylase (147 aa).

The short motif at 136–137 (GP) is the Gly-cisPro motif, important for rejection of L-amino acids element.

It belongs to the DTD family. As to quaternary structure, homodimer.

It is found in the cytoplasm. It carries out the reaction glycyl-tRNA(Ala) + H2O = tRNA(Ala) + glycine + H(+). The enzyme catalyses a D-aminoacyl-tRNA + H2O = a tRNA + a D-alpha-amino acid + H(+). Functionally, an aminoacyl-tRNA editing enzyme that deacylates mischarged D-aminoacyl-tRNAs. Also deacylates mischarged glycyl-tRNA(Ala), protecting cells against glycine mischarging by AlaRS. Acts via tRNA-based rather than protein-based catalysis; rejects L-amino acids rather than detecting D-amino acids in the active site. By recycling D-aminoacyl-tRNA to D-amino acids and free tRNA molecules, this enzyme counteracts the toxicity associated with the formation of D-aminoacyl-tRNA entities in vivo and helps enforce protein L-homochirality. In Streptococcus pneumoniae serotype 4 (strain ATCC BAA-334 / TIGR4), this protein is D-aminoacyl-tRNA deacylase.